A 269-amino-acid chain; its full sequence is Tryptophan synthase alpha chain (269 aa).

Residues Glu49 and Asp60 each act as proton acceptor in the active site.

The protein belongs to the TrpA family. As to quaternary structure, tetramer of two alpha and two beta chains.

The catalysed reaction is (1S,2R)-1-C-(indol-3-yl)glycerol 3-phosphate + L-serine = D-glyceraldehyde 3-phosphate + L-tryptophan + H2O. It functions in the pathway amino-acid biosynthesis; L-tryptophan biosynthesis; L-tryptophan from chorismate: step 5/5. Its function is as follows. The alpha subunit is responsible for the aldol cleavage of indoleglycerol phosphate to indole and glyceraldehyde 3-phosphate. This chain is Tryptophan synthase alpha chain, found in Pseudomonas fluorescens (strain SBW25).